Reading from the N-terminus, the 590-residue chain is Aspartate--tRNA(Asp/Asn) ligase (590 aa).

An L-aspartate-binding site is contributed by glutamate 172. The segment at 196–199 (QLFK) is aspartate. L-aspartate is bound at residue arginine 218. ATP contacts are provided by residues 218 to 220 (RDE) and glutamine 227. Histidine 449 lines the L-aspartate pocket. Position 484 (glutamate 484) interacts with ATP. Arginine 491 provides a ligand contact to L-aspartate. An ATP-binding site is contributed by 536-539 (GIDR).

Belongs to the class-II aminoacyl-tRNA synthetase family. Type 1 subfamily. As to quaternary structure, homodimer.

The protein resides in the cytoplasm. It carries out the reaction tRNA(Asx) + L-aspartate + ATP = L-aspartyl-tRNA(Asx) + AMP + diphosphate. Functionally, aspartyl-tRNA synthetase with relaxed tRNA specificity since it is able to aspartylate not only its cognate tRNA(Asp) but also tRNA(Asn). Reaction proceeds in two steps: L-aspartate is first activated by ATP to form Asp-AMP and then transferred to the acceptor end of tRNA(Asp/Asn). This is Aspartate--tRNA(Asp/Asn) ligase from Francisella tularensis subsp. tularensis (strain SCHU S4 / Schu 4).